The sequence spans 85 residues: Senescence-associated and QQS-related protein (85 aa).

The segment covering Met1 to Ser24 has biased composition (basic and acidic residues). Disordered stretches follow at residues Met1 to Val35 and Ser55 to Tyr85. The span at Ala58–Phe77 shows a compositional bias: polar residues.

As to expression, expressed predominantly within leaves and cotyledons vasculatures. Mainly observed in fully expanded leaves, at the base of mature inflorescences, in senescing leaves and cauline leaves, and, to a lower extent, in hypocotyls and rosette leaves prior to flowering.

Plays a role in carbon allocation, including during senescence and stresses, thus impacting starch accumulation. The polypeptide is Senescence-associated and QQS-related protein (Arabidopsis thaliana (Mouse-ear cress)).